A 583-amino-acid polypeptide reads, in one-letter code: Pyruvate kinase isozyme A, chloroplastic (583 aa).

A chloroplast-targeting transit peptide spans M1–N74. The span at K43–S52 shows a compositional bias: low complexity. Positions K43 to K75 are disordered. Positions G62–K75 are enriched in polar residues. R134 provides a ligand contact to substrate. Positions 136, 168, and 169 each coordinate K(+). N136–H139 serves as a coordination point for ATP. A Mg(2+)-binding site is contributed by E333. Substrate-binding residues include G356, D357, and S389. Residue D357 coordinates Mg(2+).

It belongs to the pyruvate kinase family. Oligomer of alpha and beta subunits. It depends on Mg(2+) as a cofactor. K(+) is required as a cofactor.

It localises to the plastid. It is found in the chloroplast. The catalysed reaction is pyruvate + ATP = phosphoenolpyruvate + ADP + H(+). It functions in the pathway carbohydrate degradation; glycolysis; pyruvate from D-glyceraldehyde 3-phosphate: step 5/5. The polypeptide is Pyruvate kinase isozyme A, chloroplastic (Ricinus communis (Castor bean)).